The sequence spans 107 residues: Thioredoxin (107 aa).

The Thioredoxin domain maps to 2-107 (SVSQVTDASF…LESTLNKYIS (106 aa)). Active-site nucleophile residues include Cys-31 and Cys-34. An intrachain disulfide couples Cys-31 to Cys-34.

It belongs to the thioredoxin family.

Its subcellular location is the plastid. The protein localises to the chloroplast. Functionally, participates in various redox reactions through the reversible oxidation of its active center dithiol to a disulfide and catalyzes dithiol-disulfide exchange reactions. The protein is Thioredoxin (trxA) of Porphyra purpurea (Red seaweed).